Reading from the N-terminus, the 263-residue chain is HTH-type transcriptional repressor NanR (263 aa).

Positions 1 to 22 (MGLMNAFDSQTEDSSPAIGRNL) are disordered. The 69-residue stretch at 30–98 (KKLSEMVEEE…NGERARVSRP (69 aa)) folds into the HTH gntR-type domain. A DNA-binding region (H-T-H motif) is located at residues 58 to 77 (ERELMAFFNVGRPSVREALA).

The protein belongs to the NanR family.

Functionally, transcriptional repressor that controls expression of the genes required for the catabolism of sialic acids. The sequence is that of HTH-type transcriptional repressor NanR from Shigella boydii serotype 4 (strain Sb227).